The primary structure comprises 314 residues: Homoserine kinase (314 aa).

Residue 95–105 (PHSRGLGSSAS) coordinates ATP.

Belongs to the GHMP kinase family. Homoserine kinase subfamily.

The protein resides in the cytoplasm. The enzyme catalyses L-homoserine + ATP = O-phospho-L-homoserine + ADP + H(+). It participates in amino-acid biosynthesis; L-threonine biosynthesis; L-threonine from L-aspartate: step 4/5. Its function is as follows. Catalyzes the ATP-dependent phosphorylation of L-homoserine to L-homoserine phosphate. This chain is Homoserine kinase, found in Rhodococcus opacus (strain B4).